A 59-amino-acid polypeptide reads, in one-letter code: Large ribosomal subunit protein bL32 (59 aa).

Residues 1 to 59 form a disordered region; it reads MAVQQNKKSPSKRGMHRSHDALTAPALSVDSTTGEVHRPHHISPNGMYRGRKVVKVKGE. The segment covering 49-59 has biased composition (basic residues); that stretch reads RGRKVVKVKGE.

Belongs to the bacterial ribosomal protein bL32 family.

In Neisseria meningitidis serogroup A / serotype 4A (strain DSM 15465 / Z2491), this protein is Large ribosomal subunit protein bL32 (rpmF).